A 970-amino-acid chain; its full sequence is Probable histidine kinase 6 (970 aa).

Residues 1-12 (MGKPEARSGWRN) lie on the Cytoplasmic side of the membrane. The helical transmembrane segment at 13 to 33 (AAAAAWVLVAVACAAYMHWHL) threads the bilayer. The Extracellular portion of the chain corresponds to 34-306 (RRETMDRAEE…YRQKPPLPWS (273 aa)). One can recognise a CHASE domain in the interval 82–294 (FPSAIDQDTF…GDPFRAHEMR (213 aa)). Residues 307–327 (AITNPLGTFVIWMLVGYIICA) traverse the membrane as a helical segment. Residues 328-970 (AWSRYDKVSE…LVVGTKESAV (643 aa)) are Cytoplasmic-facing. The 290-residue stretch at 362–651 (TVSHEIRTPM…TFTFSAVLKR (290 aa)) folds into the Histidine kinase domain. H365 carries the post-translational modification Phosphohistidine; by autocatalysis. 2 Response regulatory domains span residues 676 to 802 (KAIL…QQLL) and 827 to 962 (NILI…SRLV). D877 carries the post-translational modification 4-aspartylphosphate.

Post-translationally, activation probably requires a transfer of a phosphate group between a His in the transmitter domain and an Asp of the receiver domain. In terms of tissue distribution, highly expressed in spikelets and at lower levels in roots, young leaves, mature leaves and stems.

The protein resides in the cell membrane. The catalysed reaction is ATP + protein L-histidine = ADP + protein N-phospho-L-histidine.. Functionally, cytokinin receptor related to bacterial two-component regulators. Functions as a histidine kinase and transmits the stress signal to a downstream MAPK cascade. The polypeptide is Probable histidine kinase 6 (Oryza sativa subsp. japonica (Rice)).